Consider the following 351-residue polypeptide: Ribosomal RNA large subunit methyltransferase N (351 aa).

Glu-92 (proton acceptor) is an active-site residue. One can recognise a Radical SAM core domain in the interval 105–337; the sequence is GHPRSTICVS…CTVRVEKGTE (233 aa). Cys-112 and Cys-342 are joined by a disulfide. [4Fe-4S] cluster contacts are provided by Cys-119, Cys-123, and Cys-126. S-adenosyl-L-methionine contacts are provided by residues 169–170, Ser-201, 224–226, and Asn-300; these read GE and SLH. The active-site S-methylcysteine intermediate is the Cys-342.

Belongs to the radical SAM superfamily. RlmN family. [4Fe-4S] cluster is required as a cofactor.

It is found in the cytoplasm. The enzyme catalyses adenosine(2503) in 23S rRNA + 2 reduced [2Fe-2S]-[ferredoxin] + 2 S-adenosyl-L-methionine = 2-methyladenosine(2503) in 23S rRNA + 5'-deoxyadenosine + L-methionine + 2 oxidized [2Fe-2S]-[ferredoxin] + S-adenosyl-L-homocysteine. In terms of biological role, specifically methylates position 2 of adenine 2503 in 23S rRNA. This is Ribosomal RNA large subunit methyltransferase N from Nitrosopumilus maritimus (strain SCM1).